A 445-amino-acid polypeptide reads, in one-letter code: UDP-N-acetylmuramoylalanine--D-glutamate ligase (445 aa).

Position 117-123 (117-123) interacts with ATP; sequence GSNGKTT.

It belongs to the MurCDEF family.

It is found in the cytoplasm. The enzyme catalyses UDP-N-acetyl-alpha-D-muramoyl-L-alanine + D-glutamate + ATP = UDP-N-acetyl-alpha-D-muramoyl-L-alanyl-D-glutamate + ADP + phosphate + H(+). It participates in cell wall biogenesis; peptidoglycan biosynthesis. Cell wall formation. Catalyzes the addition of glutamate to the nucleotide precursor UDP-N-acetylmuramoyl-L-alanine (UMA). This chain is UDP-N-acetylmuramoylalanine--D-glutamate ligase, found in Neisseria meningitidis serogroup B (strain ATCC BAA-335 / MC58).